The sequence spans 636 residues: 1-deoxy-D-xylulose-5-phosphate synthase 2 (636 aa).

Thiamine diphosphate-binding positions include H78 and 119–121 (AHS). D150 provides a ligand contact to Mg(2+). Residues 151–152 (GS), N179, Y288, and E370 contribute to the thiamine diphosphate site. N179 contributes to the Mg(2+) binding site.

This sequence belongs to the transketolase family. DXPS subfamily. Homodimer. It depends on Mg(2+) as a cofactor. Thiamine diphosphate is required as a cofactor.

It catalyses the reaction D-glyceraldehyde 3-phosphate + pyruvate + H(+) = 1-deoxy-D-xylulose 5-phosphate + CO2. It functions in the pathway metabolic intermediate biosynthesis; 1-deoxy-D-xylulose 5-phosphate biosynthesis; 1-deoxy-D-xylulose 5-phosphate from D-glyceraldehyde 3-phosphate and pyruvate: step 1/1. Functionally, catalyzes the acyloin condensation reaction between C atoms 2 and 3 of pyruvate and glyceraldehyde 3-phosphate to yield 1-deoxy-D-xylulose-5-phosphate (DXP). The sequence is that of 1-deoxy-D-xylulose-5-phosphate synthase 2 from Jannaschia sp. (strain CCS1).